The sequence spans 246 residues: Dof zinc finger protein DOF4.7 (246 aa).

2 stretches are compositionally biased toward polar residues: residues 1 to 12 (MMTSSHQSNTTG) and 27 to 37 (QINNKEPSPAT). Residues 1–39 (MMTSSHQSNTTGFKPRRIKTTAKPPRQINNKEPSPATQP) are disordered. The segment at 41 to 95 (LKCPRCDSVNTKFCYYNNYSLSQPRHYCKNCRRYWTRGGALRNVPIGGSTRNKNK) adopts a Dof-type zinc-finger fold. The Zn(2+) site is built by cysteine 43, cysteine 46, cysteine 68, and cysteine 71. Residues 216-235 (GGATSGNHEDNDDGEGNLGN) are disordered.

In terms of assembly, interacts with ZFP2. In terms of tissue distribution, highly expressed at the base of all organs of the flower, especially in the abscission zone (AZ) of petals, stamens and sepals. Expressed at low levels in sepals, filaments, stigmatic papillae, tips of young siliques, and at the base of pedicels and leaf trichomes.

It is found in the nucleus. Functionally, transcription factor that binds specifically to a 5'-AA[AG]G-3' consensus core sequence. Involved in the negative regulation of floral organ abscission by binding to the typical DOF 5'-AAAG-3' sequences in the promoter of ADPG2/PGAZAT, and by down-regulating its expression. ADPG2/PGAZAT is an abscission-related and cell wall hydrolyzing polygalacturonase. May act through the interaction with ZFP2, an abscission-related transcription factor. The chain is Dof zinc finger protein DOF4.7 from Arabidopsis thaliana (Mouse-ear cress).